An 80-amino-acid chain; its full sequence is N-V protease (80 aa).

This sequence belongs to the peptidase S8 family. In terms of assembly, monomer. As to expression, body cavity.

The protein resides in the secreted. Inhibited by the serine protease inhibitors DFP, PMSF and TLCK. Not inhibited by the serine protease inhibitors aprotinin, elastinal, SBTI and benzamidine, the cysteine protease inhibitors iodoacetate and E64, or the metalloprotease inhibitors EDTA and EGTA. Functionally, serine protease. Hydrolyzes the alpha chains of fibrin and fibrinogen completely, has lower activity on the beta and gamma chains of fibrin and fibrinogen. The chain is N-V protease from Alitta virens (Sandworm).